The sequence spans 155 residues: Large ribosomal subunit protein bL9c (155 aa).

The protein belongs to the bacterial ribosomal protein bL9 family.

The protein localises to the plastid. Its subcellular location is the chloroplast. In terms of biological role, binds to the 23S rRNA. The polypeptide is Large ribosomal subunit protein bL9c (Pyropia yezoensis (Susabi-nori)).